The primary structure comprises 136 residues: uncharacterized protein (136 aa).

Residues 1 to 35 form the signal peptide; that stretch reads MTHRAVPCQPRAFSKIKVLVISFLFLMVAFLPFSS.

This is an uncharacterized protein from Saccharomyces cerevisiae (strain ATCC 204508 / S288c) (Baker's yeast).